The chain runs to 132 residues: Large ribosomal subunit protein bL12 (132 aa).

This sequence belongs to the bacterial ribosomal protein bL12 family. As to quaternary structure, homodimer. Part of the ribosomal stalk of the 50S ribosomal subunit. Forms a multimeric L10(L12)X complex, where L10 forms an elongated spine to which 2 to 4 L12 dimers bind in a sequential fashion. Binds GTP-bound translation factors.

Its function is as follows. Forms part of the ribosomal stalk which helps the ribosome interact with GTP-bound translation factors. Is thus essential for accurate translation. This Ehrlichia canis (strain Jake) protein is Large ribosomal subunit protein bL12.